The primary structure comprises 741 residues: 1,4-alpha-glucan branching enzyme GlgB (741 aa).

Asp-420 (nucleophile) is an active-site residue. Catalysis depends on Glu-473, which acts as the Proton donor.

Belongs to the glycosyl hydrolase 13 family. GlgB subfamily. As to quaternary structure, monomer.

It catalyses the reaction Transfers a segment of a (1-&gt;4)-alpha-D-glucan chain to a primary hydroxy group in a similar glucan chain.. It participates in glycan biosynthesis; glycogen biosynthesis. In terms of biological role, catalyzes the formation of the alpha-1,6-glucosidic linkages in glycogen by scission of a 1,4-alpha-linked oligosaccharide from growing alpha-1,4-glucan chains and the subsequent attachment of the oligosaccharide to the alpha-1,6 position. This chain is 1,4-alpha-glucan branching enzyme GlgB, found in Pseudomonas syringae pv. syringae (strain B728a).